The primary structure comprises 150 residues: Ribonuclease pancreatic delta-type (150 aa).

Positions 1–25 (MGLEKSFILFSLLVLVLGWVQPSLG) are cleaved as a signal peptide. A substrate-binding site is contributed by Arg-35. The Proton acceptor role is filled by His-37. Cystine bridges form between Cys-51–Cys-110, Cys-65–Cys-121, Cys-83–Cys-136, and Cys-90–Cys-98. Residues 66 to 70 (KPVNT) and Lys-91 contribute to the substrate site. His-145 acts as the Proton donor in catalysis.

This sequence belongs to the pancreatic ribonuclease family. As to quaternary structure, monomer.

The protein resides in the secreted. The catalysed reaction is an [RNA] containing cytidine + H2O = an [RNA]-3'-cytidine-3'-phosphate + a 5'-hydroxy-ribonucleotide-3'-[RNA].. It carries out the reaction an [RNA] containing uridine + H2O = an [RNA]-3'-uridine-3'-phosphate + a 5'-hydroxy-ribonucleotide-3'-[RNA].. Its function is as follows. Endonuclease that catalyzes the cleavage of RNA on the 3' side of pyrimidine nucleotides. Acts on single-stranded and double-stranded RNA. This Rattus tiomanicus (Malayan field rat) protein is Ribonuclease pancreatic delta-type.